Reading from the N-terminus, the 505-residue chain is DEAD-box ATP-dependent RNA helicase 38 (505 aa).

Positions 1–81 are disordered; the sequence is MADGGKPPTP…DQGPPLLDDS (81 aa). Positions 27–44 are enriched in low complexity; it reads KAAAAAEAASSSSSNEPA. The Q motif signature appears at 100-129; that stretch reads AAFEDLKLTPELLKGLHDEMGFSRPSKIQA. The Helicase ATP-binding domain occupies 134–310; that stretch reads MILTPPYKDL…TRVIKDGNQI (177 aa). An ATP-binding site is contributed by 147–154; sequence AHNGSGKT. The DEAD box signature appears at 254 to 257; that stretch reads DEAD. Positions 338 to 493 constitute a Helicase C-terminal domain; sequence VIKDKIFEFG…EVRNWQSEED (156 aa).

Belongs to the DEAD box helicase family. DDX19/DBP5 subfamily.

The protein localises to the cytoplasm. It is found in the nucleus. It carries out the reaction ATP + H2O = ADP + phosphate + H(+). Functionally, ATP-dependent RNA helicase essential for mRNA export from the nucleus. Plays an important role in the positive regulation of CBF/DREB transcription factors. In Oryza sativa subsp. japonica (Rice), this protein is DEAD-box ATP-dependent RNA helicase 38.